The chain runs to 286 residues: MIQDILNRYLFDNADVRGELVQLQDSYQQVIGSHAYPPVLQILLGELLAATSLLTATLKFSGDISVQLQGNGPVSLAVINGNNQQQLRGIARWEGELADDASLADLFGQGYMVITLTPDEGERYQGVVALDKPTLAACVEDYFNQSEQLPTALWLFADGKQAAGMFLQVLPSQEDHNADFEHLCQLTATIKAEELFTLDAQDILHRLYHQEEVRLFDPIEVSFKCTCSRERSAAAIKTIDQAEVEAILAEDGKVEMGCEYCNAKYVFDGIDIAAIYANGTGSNTQQ.

Intrachain disulfides connect cysteine 225-cysteine 227 and cysteine 258-cysteine 261.

The protein belongs to the HSP33 family. Post-translationally, under oxidizing conditions two disulfide bonds are formed involving the reactive cysteines. Under reducing conditions zinc is bound to the reactive cysteines and the protein is inactive.

It localises to the cytoplasm. Functionally, redox regulated molecular chaperone. Protects both thermally unfolding and oxidatively damaged proteins from irreversible aggregation. Plays an important role in the bacterial defense system toward oxidative stress. The chain is 33 kDa chaperonin from Shewanella sp. (strain ANA-3).